The primary structure comprises 572 residues: MFS-type transporter pydD (572 aa).

Positions 1–15 (MLQEDKSSETMHDPS) are enriched in basic and acidic residues. The interval 1–46 (MLQEDKSSETMHDPSTRGVETRNVTAVDSPLETATTSESPETERTN) is disordered. Asn-23 is a glycosylation site (N-linked (GlcNAc...) asparagine). A compositionally biased stretch (low complexity) spans 29–39 (SPLETATTSES). The next 8 membrane-spanning stretches (helical) occupy residues 56-76 (FWALLVSISLAGLLTALEGTI), 88-108 (LGGGHLYVWVVNGYLFAMTAM), 123-143 (WPMLGATALFVLGSGICGGAT), 156-176 (GIGASGTTVLTETIICDVVPL), 185-205 (IVMGMIFLGTALGPFFAGLIV), 212-232 (WTFYLALPVGGAALVALFSFL), 255-275 (ALFVAAISSVLIGLSWAGSVY), and 282-302 (VLVPLFVGIAGMGLFMVFEGS). An N-linked (GlcNAc...) asparagine glycan is attached at Asn-317. A run of 6 helical transmembrane segments spans residues 321–341 (VGVMIMTFFHGIITIWQLYFM), 358–378 (VQILATILAILPAAGIGGFLM), 386–406 (PIHYASWAVTLIGLGLFSLLD), 419–439 (IVYSMGAGMLVPTLLPALLAP), 451–471 (TWSFVRSFGMVWGTAIPAAVF), and 529–549 (WLVSLAFAGMGLLAATLAREV).

This sequence belongs to the major facilitator superfamily.

Its subcellular location is the membrane. Its function is as follows. MFS-type transporter; part of the gene cluster that mediates the biosynthesis of pyrrocidines, fungal natural products containing a macrocyclic para-cyclophane connected to a decahydrofluorene ring system that show potent antibiotic activities toward Gram-negative bacteria. The sequence is that of MFS-type transporter pydD from Acremonium sp.